Reading from the N-terminus, the 430-residue chain is GTPase Obg (430 aa).

The 158-residue stretch at 1–158 (MFVDQVKISL…LDVSLELKLL (158 aa)) folds into the Obg domain. Residues 118–145 (KGGRGGRGNSRFATPRNPAPDFSEKGEP) are disordered. Positions 159 to 329 (ADVGLVGFPS…LLYAIADKLE (171 aa)) constitute an OBG-type G domain. Residues 165 to 172 (GFPSVGKS), 190 to 194 (FTTIK), 212 to 215 (DLPG), 282 to 285 (NKMD), and 310 to 312 (STI) each bind GTP. The Mg(2+) site is built by Ser-172 and Thr-192. Residues 352–430 (KHTPSQDKFT…ILGGEFEFVE (79 aa)) enclose the OCT domain.

Belongs to the TRAFAC class OBG-HflX-like GTPase superfamily. OBG GTPase family. As to quaternary structure, monomer. Requires Mg(2+) as cofactor.

It is found in the cytoplasm. Functionally, an essential GTPase which binds GTP, GDP and possibly (p)ppGpp with moderate affinity, with high nucleotide exchange rates and a fairly low GTP hydrolysis rate. Plays a role in control of the cell cycle, stress response, ribosome biogenesis and in those bacteria that undergo differentiation, in morphogenesis control. This is GTPase Obg from Staphylococcus aureus (strain bovine RF122 / ET3-1).